The chain runs to 97 residues: Aspartyl/glutamyl-tRNA(Asn/Gln) amidotransferase subunit C (97 aa).

The protein belongs to the GatC family. In terms of assembly, heterotrimer of A, B and C subunits.

The catalysed reaction is L-glutamyl-tRNA(Gln) + L-glutamine + ATP + H2O = L-glutaminyl-tRNA(Gln) + L-glutamate + ADP + phosphate + H(+). The enzyme catalyses L-aspartyl-tRNA(Asn) + L-glutamine + ATP + H2O = L-asparaginyl-tRNA(Asn) + L-glutamate + ADP + phosphate + 2 H(+). Its function is as follows. Allows the formation of correctly charged Asn-tRNA(Asn) or Gln-tRNA(Gln) through the transamidation of misacylated Asp-tRNA(Asn) or Glu-tRNA(Gln) in organisms which lack either or both of asparaginyl-tRNA or glutaminyl-tRNA synthetases. The reaction takes place in the presence of glutamine and ATP through an activated phospho-Asp-tRNA(Asn) or phospho-Glu-tRNA(Gln). The chain is Aspartyl/glutamyl-tRNA(Asn/Gln) amidotransferase subunit C from Listeria innocua serovar 6a (strain ATCC BAA-680 / CLIP 11262).